The sequence spans 203 residues: ATP-dependent Clp protease proteolytic subunit 1 (203 aa).

Ser98 serves as the catalytic Nucleophile. His123 is an active-site residue.

The protein belongs to the peptidase S14 family. As to quaternary structure, fourteen ClpP subunits assemble into 2 heptameric rings which stack back to back to give a disk-like structure with a central cavity, resembling the structure of eukaryotic proteasomes.

The protein localises to the cytoplasm. It carries out the reaction Hydrolysis of proteins to small peptides in the presence of ATP and magnesium. alpha-casein is the usual test substrate. In the absence of ATP, only oligopeptides shorter than five residues are hydrolyzed (such as succinyl-Leu-Tyr-|-NHMec, and Leu-Tyr-Leu-|-Tyr-Trp, in which cleavage of the -Tyr-|-Leu- and -Tyr-|-Trp bonds also occurs).. Functionally, cleaves peptides in various proteins in a process that requires ATP hydrolysis. Has a chymotrypsin-like activity. Plays a major role in the degradation of misfolded proteins. This chain is ATP-dependent Clp protease proteolytic subunit 1, found in Chlamydia felis (strain Fe/C-56) (Chlamydophila felis).